We begin with the raw amino-acid sequence, 172 residues long: Ly6/PLAUR domain-containing protein 6B (172 aa).

Residues 1–25 (MLLLCHILAVTILQILIISENWVFA) form the signal peptide. Positions 46–137 (FKCFTCENAG…VELPTNHTNA (92 aa)) constitute a UPAR/Ly6 domain. The tract at residues 46–140 (FKCFTCENAG…PTNHTNAVFA (95 aa)) is sufficient for inhibiting alpha-7 nAChR currents. 6 cysteine pairs are disulfide-bonded: Cys48–Cys76, Cys51–Cys60, Cys69–Cys95, Cys101–Cys120, Cys106–Cys117, and Cys121–Cys126. A lipid anchor (GPI-anchor amidated serine) is attached at Ser148. Positions 149-172 (GSSVSSVPSPYLLVLAWLFMLPLL) are cleaved as a propeptide — removed in mature form.

It localises to the cell membrane. Functionally, likely acts as a modulator of nicotinic acetylcholine receptors (nAChRs) activity. In vitro acts on nAChRs in a subtype- and stoichiometry-dependent manner. Modulates specifically alpha-3(3):beta-4(2) nAChRs by enhancing the sensitivity to ACh, decreasing ACh-induced maximal current response and increasing the rate of desensitization to ACh; has no effect on alpha-7 homomeric nAChRs; modulates alpha-3(2):alpha-5:beta-4(2) nAChRs in the context of CHRNA5/alpha-5 variant Asn-398 but not its wild-type sequence. However, according to another report in vitro it can weakly inhibits alpha-7 nAChRs. This chain is Ly6/PLAUR domain-containing protein 6B (Lypd6b), found in Mus musculus (Mouse).